We begin with the raw amino-acid sequence, 250 residues long: Small ribosomal subunit protein uS3 (250 aa).

A KH type-2 domain is found at 16–85; sequence IDEYLEKELE…NPQIEVKEVS (70 aa).

It belongs to the universal ribosomal protein uS3 family. As to quaternary structure, part of the 30S ribosomal subunit.

Functionally, binds the lower part of the 30S subunit head. The sequence is that of Small ribosomal subunit protein uS3 from Methanobrevibacter smithii (strain ATCC 35061 / DSM 861 / OCM 144 / PS).